A 214-amino-acid polypeptide reads, in one-letter code: Nascent polypeptide-associated complex subunit alpha (214 aa).

Residues 1 to 80 form a disordered region; it reads MPGEATETVP…SEKKARKAMS (80 aa). Acidic residues predominate over residues 29–40; that stretch reads SDSDDSPPELEQ. Low complexity predominate over residues 41–56; that stretch reads DSTQTTTQQAQLAAAA. One can recognise an NAC-A/B domain in the interval 69–134; the sequence is SRSEKKARKA…AKIEDLSQQA (66 aa). Positions 175 to 212 constitute a UBA domain; it reads VEVKDIELVMSQANVSRAKAVRALKNNSNDIVNAIMEL.

It belongs to the NAC-alpha family.

Functionally, may promote appropriate targeting of ribosome-nascent polypeptide complexes. This is Nascent polypeptide-associated complex subunit alpha (naca) from Xenopus tropicalis (Western clawed frog).